We begin with the raw amino-acid sequence, 648 residues long: Beta-glucuronidase (648 aa).

An N-terminal signal peptide occupies residues 1–19; that stretch reads GLAMAWAVLGPLLWGCALA. N-linked (GlcNAc...) asparagine glycosylation is found at N170, N269, and N417. The active-site Proton donor is E448. Residue N628 is glycosylated (N-linked (GlcNAc...) asparagine).

Belongs to the glycosyl hydrolase 2 family. In terms of assembly, homotetramer.

The protein localises to the lysosome. It carries out the reaction a beta-D-glucuronoside + H2O = D-glucuronate + an alcohol. Its activity is regulated as follows. Inhibited by L-aspartic acid. Plays an important role in the degradation of dermatan and keratan sulfates. This Chlorocebus aethiops (Green monkey) protein is Beta-glucuronidase (GUSB).